Consider the following 307-residue polypeptide: CRISPR-associated endonuclease Cas1 2 (307 aa).

Mn(2+) is bound by residues Glu142, His206, and Glu221.

The protein belongs to the CRISPR-associated endonuclease Cas1 family. As to quaternary structure, homodimer, forms a heterotetramer with a Cas2 homodimer. Forms oligomers, probably binds nucleic acids as a homodimer. Requires Mg(2+) as cofactor. Mn(2+) is required as a cofactor.

Functionally, CRISPR (clustered regularly interspaced short palindromic repeat), is an adaptive immune system that provides protection against mobile genetic elements (viruses, transposable elements and conjugative plasmids). CRISPR clusters contain spacers, sequences complementary to antecedent mobile elements, and target invading nucleic acids. CRISPR clusters are transcribed and processed into CRISPR RNA (crRNA). Acts as a dsDNA endonuclease. Involved in the integration of spacer DNA into the CRISPR cassette. In terms of biological role, in vitro catalyzes a concerted transesterification reaction on branched DNA, as would be expected during integration of protospacers into the CRISPR leader sequence; Cas2 is not required in vitro. This reaction requires a 3'-OH group at the branch point. Binds ss- and dsDNA and ss- and dsRNA with approximately equal affinity. May be able to anneal complementary DNA strands. The polypeptide is CRISPR-associated endonuclease Cas1 2 (Saccharolobus solfataricus (strain ATCC 35092 / DSM 1617 / JCM 11322 / P2) (Sulfolobus solfataricus)).